Consider the following 502-residue polypeptide: Arabinose import ATP-binding protein AraG (502 aa).

ABC transporter domains lie at 5 to 240 (LEFS…MVGR) and 253 to 496 (LGGI…LPDK). Position 37-44 (37-44 (GENGAGKS)) interacts with ATP.

This sequence belongs to the ABC transporter superfamily. Arabinose importer (TC 3.A.1.2.2) family. The complex is composed of two ATP-binding proteins (AraG), two transmembrane proteins (AraH) and a solute-binding protein (AraF).

It localises to the cell inner membrane. The catalysed reaction is L-arabinose(out) + ATP + H2O = L-arabinose(in) + ADP + phosphate + H(+). Its function is as follows. Part of the ABC transporter complex AraFGH involved in arabinose import. Responsible for energy coupling to the transport system. The polypeptide is Arabinose import ATP-binding protein AraG (Rhizobium johnstonii (strain DSM 114642 / LMG 32736 / 3841) (Rhizobium leguminosarum bv. viciae)).